Reading from the N-terminus, the 1415-residue chain is DNA-directed RNA polymerase subunit beta' (1415 aa).

4 residues coordinate Zn(2+): Cys-69, Cys-71, Cys-84, and Cys-87. Residues Asp-461, Asp-463, and Asp-465 each coordinate Mg(2+). Zn(2+)-binding residues include Cys-805, Cys-879, Cys-886, and Cys-889.

This sequence belongs to the RNA polymerase beta' chain family. In terms of assembly, the RNAP catalytic core consists of 2 alpha, 1 beta, 1 beta' and 1 omega subunit. When a sigma factor is associated with the core the holoenzyme is formed, which can initiate transcription. It depends on Mg(2+) as a cofactor. Requires Zn(2+) as cofactor.

It carries out the reaction RNA(n) + a ribonucleoside 5'-triphosphate = RNA(n+1) + diphosphate. DNA-dependent RNA polymerase catalyzes the transcription of DNA into RNA using the four ribonucleoside triphosphates as substrates. This Anaplasma marginale (strain Florida) protein is DNA-directed RNA polymerase subunit beta'.